The sequence spans 59 residues: Small ribosomal subunit protein bS21 (59 aa).

Residues 27–59 (GLMAEMRKREHYEKPSVRRKKKAQARNKKKRYA) form a disordered region. A compositionally biased stretch (basic and acidic residues) spans 31-42 (EMRKREHYEKPS). Residues 43 to 59 (VRRKKKAQARNKKKRYA) show a composition bias toward basic residues.

It belongs to the bacterial ribosomal protein bS21 family.

This chain is Small ribosomal subunit protein bS21, found in Carboxydothermus hydrogenoformans (strain ATCC BAA-161 / DSM 6008 / Z-2901).